The sequence spans 501 residues: Alveolysin (501 aa).

A signal peptide spans 1–32 (MKKKSNHLKGRKVLVSLLVSLQVFAFASISSA). 4 beta stranded membrane-spanning segments follow: residues 191-204 (QNQI…NAKV), 211-220 (IDFNAVANGE), 289-298 (SNDVQTAFKL), and 306-318 (QASG…YENS). The short motif at 460–470 (ECTGLAWEWWR) is the Conserved undecapeptide element. A Cholesterol binding motif is present at residues 492–493 (TL).

Belongs to the cholesterol-dependent cytolysin family. In terms of assembly, homooligomeric pore complex of 35 to 50 subunits; when inserted in the host membrane.

The protein resides in the secreted. It is found in the host cell membrane. Its activity is regulated as follows. Inhibited by cholesterol and thiol reagents. Functionally, a cholesterol-dependent toxin that causes cytolysis by forming pores in cholesterol containing host membranes. After binding to target membranes, the protein undergoes a major conformation change, leading to its insertion in the host membrane and formation of an oligomeric pore complex. Cholesterol is required for binding to host cell membranes, membrane insertion and pore formation; cholesterol binding is mediated by a Thr-Leu pair in the C-terminus. Can be reversibly inactivated by oxidation. This chain is Alveolysin (alv), found in Paenibacillus alvei (Bacillus alvei).